We begin with the raw amino-acid sequence, 510 residues long: Probable cytosol aminopeptidase (510 aa).

Mn(2+) is bound by residues Lys272 and Asp277. The active site involves Lys284. The Mn(2+) site is built by Asp296, Asp355, and Glu357. Residue Arg359 is part of the active site.

Belongs to the peptidase M17 family. Requires Mn(2+) as cofactor.

Its subcellular location is the cytoplasm. It catalyses the reaction Release of an N-terminal amino acid, Xaa-|-Yaa-, in which Xaa is preferably Leu, but may be other amino acids including Pro although not Arg or Lys, and Yaa may be Pro. Amino acid amides and methyl esters are also readily hydrolyzed, but rates on arylamides are exceedingly low.. The catalysed reaction is Release of an N-terminal amino acid, preferentially leucine, but not glutamic or aspartic acids.. Functionally, presumably involved in the processing and regular turnover of intracellular proteins. Catalyzes the removal of unsubstituted N-terminal amino acids from various peptides. This chain is Probable cytosol aminopeptidase, found in Synechococcus sp. (strain JA-2-3B'a(2-13)) (Cyanobacteria bacterium Yellowstone B-Prime).